We begin with the raw amino-acid sequence, 292 residues long: Glutathione S-transferase L2, chloroplastic (292 aa).

Residues 1–56 constitute a chloroplast transit peptide; sequence MSVGLKVSAFLHPTLALSSRDVSLSSSSSSLYLDRKILRPGSGRRWCKSRRTEPIL. Positions 79 to 160 constitute a GST N-terminal domain; sequence GSTRLYISYT…YIDTNFEGPS (82 aa). Glutathione-binding positions include 89–90, 117–118, 131–132, and 144–145; these read CP, NR, KV, and ES. One can recognise a GST C-terminal domain in the interval 130–286; the sequence is NKVPALEHNN…ELVERYKRRV (157 aa).

The protein belongs to the GST superfamily. Lambda family.

Its subcellular location is the plastid. It is found in the chloroplast. It catalyses the reaction RX + glutathione = an S-substituted glutathione + a halide anion + H(+). Catalyzes the glutathione-dependent reduction of S-glutathionylquercetin to quercetin. In vitro, possesses glutathione-dependent thiol transferase activity toward 2-hydroxyethyl disulfide (HED). The chain is Glutathione S-transferase L2, chloroplastic (GSTL2) from Arabidopsis thaliana (Mouse-ear cress).